The following is a 67-amino-acid chain: MRLHYLLFVFLILFLVPAPGDAFLPKTLRKFFCRIRGGRCAVLNCLGKEEQIGRCSNSGRKCCRKKK.

An N-terminal signal peptide occupies residues 1–22 (MRLHYLLFVFLILFLVPAPGDA). 3 cysteine pairs are disulfide-bonded: Cys-33/Cys-62, Cys-40/Cys-55, and Cys-45/Cys-63.

Belongs to the beta-defensin family.

The protein resides in the secreted. Functionally, has antibacterial activity. In Mus musculus (Mouse), this protein is Beta-defensin 14 (Defb14).